Reading from the N-terminus, the 345-residue chain is MLPTVNNNIVIALDAMGGDFAPLSVIQGASFFLDNLVDPGVEVFFHIYGDQKEISPLLSKYKKVSDNSEFTHCSDNVLPNDKPSFALRHRKDSSMKAAVEAVKKGKAFGMVSSGNTGALMAVSRFILGTLPNIYRPAIASVCPTKTKSFALLDLGANVDCNTDSLFQFALMGSIFAKIALKVENPEVALLNIGTEEVKGTDSVRGAFELLKNAPSINFKGYIEASEFLDGNIDVIVADGFVGNVMLKTAEATAGTFISLIKQEVFNSWMTKMLVGILLKPKLNKALERFNPKIRSGAMFLGLNGIIIKSHGNSDAISFAHAIKFAVNAISENLNQKIINGVSHIE.

This sequence belongs to the PlsX family. As to quaternary structure, homodimer. Probably interacts with PlsY.

Its subcellular location is the cytoplasm. The catalysed reaction is a fatty acyl-[ACP] + phosphate = an acyl phosphate + holo-[ACP]. It participates in lipid metabolism; phospholipid metabolism. In terms of biological role, catalyzes the reversible formation of acyl-phosphate (acyl-PO(4)) from acyl-[acyl-carrier-protein] (acyl-ACP). This enzyme utilizes acyl-ACP as fatty acyl donor, but not acyl-CoA. This is Phosphate acyltransferase from Wolbachia pipientis subsp. Culex pipiens (strain wPip).